Reading from the N-terminus, the 254-residue chain is Transcription factor bHLH51 (254 aa).

A bHLH domain is found at 62-111 (SLSRSHRLAEKRRRDRINSHLTALRKLVPNSDKLDKAALLATVIEQVKEL).

In terms of assembly, homodimer. Expressed constitutively in roots, stems, and flowers.

Its subcellular location is the nucleus. This is Transcription factor bHLH51 (BHLH51) from Arabidopsis thaliana (Mouse-ear cress).